Reading from the N-terminus, the 682-residue chain is Nisin leader peptide-processing serine protease NisP (682 aa).

A signal peptide spans 1–22 (MKKILGFLFIVCSLGLSATVHG). A propeptide spanning residues 23–195 (ETTNSQQLLS…RKAKEVVSLR (173 aa)) is cleaved from the precursor. Positions 231 to 566 (QWDMKYVTNN…VDLLNGKNKA (336 aa)) constitute a Peptidase S8 domain. Catalysis depends on charge relay system residues Asp-259, His-306, and Ser-512. The LPXTG sorting signal motif lies at 652–656 (LPVTG). The residue at position 655 (Thr-655) is a Pentaglycyl murein peptidoglycan amidated threonine. Positions 656-682 (GDGEDFLPALGIVCISILGILKRKTKN) are cleaved as a propeptide — removed by sortase.

This sequence belongs to the peptidase S8 family.

The protein localises to the secreted. The protein resides in the cell wall. It functions in the pathway antibiotic biosynthesis; nisin biosynthesis. Functionally, cleaves the lantibiotic nisin precursor peptide. This Lactococcus lactis subsp. lactis (Streptococcus lactis) protein is Nisin leader peptide-processing serine protease NisP (nisP).